Here is a 356-residue protein sequence, read N- to C-terminus: Nucleosome assembly protein 1;4 (356 aa).

The stretch at 34-88 forms a coiled coil; the sequence is VNALKNKLQNLAGQHSDILETLTPQVRKRVDVLRELQSQHDELESHFFEERAALE. Positions 55-70 match the Nuclear export signal motif; it reads LTPQVRKRVDVLRELQ. The Nuclear localization signal motif lies at 230–235; that stretch reads KKKPKK. A disordered region spans residues 304 to 356; the sequence is FTGEAAEGDEFEDIEDDDDDDDDDDDEDDEDEEDEDDEEEEKSKKKSSALKVE. Over residues 309 to 343 the composition is skewed to acidic residues; that stretch reads AEGDEFEDIEDDDDDDDDDDDEDDEDEEDEDDEEE. Residues 347 to 356 are compositionally biased toward basic residues; it reads KKKSSALKVE.

Belongs to the nucleosome assembly protein (NAP) family. As to quaternary structure, can form homomeric and heteromeric protein complexes with NAP1;3. Binds histones H2A and H2B in vivo. Also able to bind histones H1 and H4 in vitro. Interacts with CYCB1;1 and with alpha tubulin.

Its subcellular location is the nucleus. It is found in the cytoplasm. Functionally, may modulate chromatin structure by regulation of nucleosome assembly/disassembly. Could function together with B-type cyclins in the regulation of microtubule dynamics. The sequence is that of Nucleosome assembly protein 1;4 (NAP1;4) from Nicotiana tabacum (Common tobacco).